The primary structure comprises 205 residues: uncharacterized protein (205 aa).

The next 3 membrane-spanning stretches (helical) occupy residues 45 to 65 (LFFY…FLVI), 119 to 139 (VFWL…VTAF), and 144 to 164 (FEWM…LWGY).

It belongs to the TVP23 family.

It is found in the membrane. This is an uncharacterized protein from Caenorhabditis elegans.